Here is a 359-residue protein sequence, read N- to C-terminus: sn-1 linoleoyl-lipid 6-desaturase (359 aa).

2 helical membrane passes run 45-65 (LIIV…PVIF) and 69-89 (LLGC…VGHD). The short motif at 88–92 (HDANH) is the Histidine box-1 element. Residues 123 to 128 (HNYLHH) carry the Histidine box-2 motif. The next 3 membrane-spanning stretches (helical) occupy residues 165-185 (IWGL…YLVL), 206-226 (LLGI…ALGF), and 231-251 (VLIG…TIFM). The Histidine box-3 motif lies at 306–310 (HHLFP).

Belongs to the fatty acid desaturase type 2 family. Fe(2+) serves as cofactor.

The protein resides in the membrane. The catalysed reaction is a 1-[(9Z,12Z)-octadecdienoyl]-2-acyl-glycerolipid + 2 reduced [2Fe-2S]-[ferredoxin] + O2 + 2 H(+) = a 1-[(6Z,9Z,12Z)-octadectrienoyl]-2-acyl-glycerolipid + 2 oxidized [2Fe-2S]-[ferredoxin] + 2 H2O. It participates in lipid metabolism; polyunsaturated fatty acid biosynthesis. In terms of biological role, desaturase involved in fatty acid biosynthesis. Introduces a double bond at carbon 6 of linoleoyl group (18:2) attached to the sn-1 position of the glycerol moiety of membrane glycerolipids, leading to the formation of gamma-linolenic acid (GLA). This is sn-1 linoleoyl-lipid 6-desaturase from Synechocystis sp. (strain ATCC 27184 / PCC 6803 / Kazusa).